A 439-amino-acid chain; its full sequence is Glutamine synthetase (439 aa).

A GS beta-grasp domain is found at 12-93 (RSPKFVQLIF…VYGYIYKDGK (82 aa)). The region spanning 99–439 (PRGVLKRVIE…EWELERYFFI (341 aa)) is the GS catalytic domain. Residues Glu122 and Glu124 each coordinate Mg(2+). ATP is bound at residue Glu172. Mg(2+) contacts are provided by Glu177 and Glu184. Gly229 contributes to the L-glutamate binding site. His233 is a Mg(2+) binding site. Residues 235 to 237 (HIS) and Ser237 each bind ATP. Residues Arg283, Glu289, and Arg301 each coordinate L-glutamate. ATP is bound by residues Arg301 and Arg306. Glu318 is a binding site for Mg(2+). Arg320 is an L-glutamate binding site.

This sequence belongs to the glutamine synthetase family. In terms of assembly, oligomer of 12 subunits arranged in the form of two hexagons. Mg(2+) serves as cofactor.

Its subcellular location is the cytoplasm. It catalyses the reaction L-glutamate + NH4(+) + ATP = L-glutamine + ADP + phosphate + H(+). Its function is as follows. Probably involved in nitrogen metabolism via ammonium assimilation. Catalyzes the ATP-dependent biosynthesis of glutamine from glutamate and ammonia. The sequence is that of Glutamine synthetase from Pyrococcus abyssi (strain GE5 / Orsay).